Here is a 393-residue protein sequence, read N- to C-terminus: Staphopain B (393 aa).

The signal sequence occupies residues 1 to 36 (MNSSCKTRVFNIISIIMVSMLILSLGAFANNNKAKA). Positions 37 to 219 (DSHSKQLEIN…KVEENEAIQE (183 aa)) are excised as a propeptide. Active-site residues include Cys243, His340, and Asn360.

Belongs to the peptidase C47 family. In terms of assembly, in the cytoplasm, prematurely activated/folded SspB forms a stable non-covalent complex with SspC. Post-translationally, proteolytically cleaved by staphylococcal serine protease (SspA).

It localises to the secreted. With respect to regulation, prematurely activated/folded staphopain B is inhibited by staphostatin B (SspC), which is probably required to protect staphylococcal cytoplasmic proteins from degradation by SspB. In terms of biological role, cysteine protease that plays an important role in the inhibition of host innate immune response. Degrades host elastin, fibrogen, fibronectin and kininogen. Blocks phagocytosis of opsonised S.aureus by neutrophils and monocytes by inducing their death in a proteolytic activity-dependent manner. Decreases surface expression of the 'don't eat me' signal CD31 on neutrophils. Cleaves host galectin-3/LGALS3, thereby inhibiting the neutrophil-activating ability of the lectin. In Staphylococcus aureus, this protein is Staphopain B (sspB).